Here is a 326-residue protein sequence, read N- to C-terminus: Endochitinase (326 aa).

Residues 1–25 (MVYCTASLPLLLLLLVGLLAGEAFA) form the signal peptide. The region spanning 26-66 (EQCGRQAGGALCPGGLCCSQFGWCGSTSDYCGPTCQSQCGG) is the Chitin-binding type-1 domain. 7 disulfides stabilise this stretch: cysteine 28-cysteine 43, cysteine 37-cysteine 49, cysteine 42-cysteine 56, cysteine 60-cysteine 64, cysteine 96-cysteine 158, cysteine 170-cysteine 178, and cysteine 277-cysteine 309. Glutamate 140 acts as the Proton donor in catalysis.

Belongs to the glycosyl hydrolase 19 family. Chitinase class I subfamily. Expressed in the pulp of the fruit (at protein level). Expressed in mesocarp (at protein level).

It carries out the reaction Random endo-hydrolysis of N-acetyl-beta-D-glucosaminide (1-&gt;4)-beta-linkages in chitin and chitodextrins.. In terms of biological role, defense against chitin-containing fungal pathogens. Has in vitro antifungal activity against F.oxysporum inhibiting its growth and the branching of its hyphae. Has endochitinase activity, but no exochitinase or lysozyme activities. This chain is Endochitinase, found in Persea americana (Avocado).